The primary structure comprises 263 residues: Endolytic peptidoglycan transglycosylase RlpA (263 aa).

The signal sequence occupies residues 1-16 (MNRIYLYLLIVLILAG). The N-palmitoyl cysteine moiety is linked to residue Cys17. Cys17 carries S-diacylglycerol cysteine lipidation. One can recognise an SPOR domain in the interval 182 to 257 (KNNALEYVIQ…AGYDSAFIKT (76 aa)).

Belongs to the RlpA family.

The protein resides in the cell membrane. Functionally, lytic transglycosylase with a strong preference for naked glycan strands that lack stem peptides. This is Endolytic peptidoglycan transglycosylase RlpA from Vibrio cholerae serotype O1 (strain ATCC 39315 / El Tor Inaba N16961).